The chain runs to 524 residues: Anthranilate synthase component 1 (524 aa).

Residues 1-16 are compositionally biased toward polar residues; that stretch reads MQTTANHSSRSTQTGT. Residues 1–25 form a disordered region; the sequence is MQTTANHSSRSTQTGTRAHGAALAE. Residues Ser-74 and 298 to 300 contribute to the L-tryptophan site; that span reads PYM. 339 to 340 lines the chorismate pocket; it reads GT. Residue Lys-355 forms an Isoglutamyl lysine isopeptide (Lys-Gln) (interchain with Q-Cter in protein Pup) linkage. Position 366 (Glu-366) interacts with Mg(2+). Chorismate is bound by residues Tyr-454, Arg-474, 488–490, and Gly-490; that span reads GGG. Glu-503 contributes to the Mg(2+) binding site.

The protein belongs to the anthranilate synthase component I family. Heterotetramer consisting of two non-identical subunits: a beta subunit (TrpG) and a large alpha subunit (TrpE). Mg(2+) serves as cofactor.

It catalyses the reaction chorismate + L-glutamine = anthranilate + pyruvate + L-glutamate + H(+). It functions in the pathway amino-acid biosynthesis; L-tryptophan biosynthesis; L-tryptophan from chorismate: step 1/5. Its activity is regulated as follows. Feedback inhibited by tryptophan. In terms of biological role, part of a heterotetrameric complex that catalyzes the two-step biosynthesis of anthranilate, an intermediate in the biosynthesis of L-tryptophan. In the first step, the glutamine-binding beta subunit (TrpG) of anthranilate synthase (AS) provides the glutamine amidotransferase activity which generates ammonia as a substrate that, along with chorismate, is used in the second step, catalyzed by the large alpha subunit of AS (TrpE) to produce anthranilate. In the absence of TrpG, TrpE can synthesize anthranilate directly from chorismate and high concentrations of ammonia. The sequence is that of Anthranilate synthase component 1 (trpE) from Mycolicibacterium smegmatis (strain ATCC 700084 / mc(2)155) (Mycobacterium smegmatis).